A 469-amino-acid polypeptide reads, in one-letter code: 3-isopropylmalate dehydratase large subunit (469 aa).

Residues Cys-349, Cys-410, and Cys-413 each contribute to the [4Fe-4S] cluster site.

Belongs to the aconitase/IPM isomerase family. LeuC type 1 subfamily. Heterodimer of LeuC and LeuD. [4Fe-4S] cluster is required as a cofactor.

The catalysed reaction is (2R,3S)-3-isopropylmalate = (2S)-2-isopropylmalate. It functions in the pathway amino-acid biosynthesis; L-leucine biosynthesis; L-leucine from 3-methyl-2-oxobutanoate: step 2/4. In terms of biological role, catalyzes the isomerization between 2-isopropylmalate and 3-isopropylmalate, via the formation of 2-isopropylmaleate. This is 3-isopropylmalate dehydratase large subunit from Neisseria meningitidis serogroup C / serotype 2a (strain ATCC 700532 / DSM 15464 / FAM18).